A 247-amino-acid polypeptide reads, in one-letter code: tRNA (guanine-N(1)-)-methyltransferase (247 aa).

S-adenosyl-L-methionine contacts are provided by residues Gly-115 and Ile-135–Leu-140.

Belongs to the RNA methyltransferase TrmD family. As to quaternary structure, homodimer.

Its subcellular location is the cytoplasm. It carries out the reaction guanosine(37) in tRNA + S-adenosyl-L-methionine = N(1)-methylguanosine(37) in tRNA + S-adenosyl-L-homocysteine + H(+). Its function is as follows. Specifically methylates guanosine-37 in various tRNAs. This Alkaliphilus metalliredigens (strain QYMF) protein is tRNA (guanine-N(1)-)-methyltransferase.